Here is a 305-residue protein sequence, read N- to C-terminus: MGAQLRVYKRRIRSVTATKKITKAMEMIAASRVVKAQRKVAASTPYATELTRAVTAVGTGSNTKHPLTTQAETVTRSAVLLLTSDRGLAGAFNSNAIKAAEQLTARLEAEGREVDTYIVGRRGAAHYNFRERKVTELWTGFTDEPTYADAKKVAGPLIEAIEKETADGGVDELHIVYTEFVSMMTQTAIDARLLPLSLEEVAEESSTQGEIRPLYDFEPSAEDVLDALLPRYVESRIYNALLQSAASKHAATRRAMKSATDNAGELINTLSRLANAARQAEITQEISEIVGGASALADATAGSDR.

The protein belongs to the ATPase gamma chain family. F-type ATPases have 2 components, CF(1) - the catalytic core - and CF(0) - the membrane proton channel. CF(1) has five subunits: alpha(3), beta(3), gamma(1), delta(1), epsilon(1). CF(0) has three main subunits: a, b and c.

It is found in the cell membrane. Functionally, produces ATP from ADP in the presence of a proton gradient across the membrane. The gamma chain is believed to be important in regulating ATPase activity and the flow of protons through the CF(0) complex. The polypeptide is ATP synthase gamma chain (Streptomyces avermitilis (strain ATCC 31267 / DSM 46492 / JCM 5070 / NBRC 14893 / NCIMB 12804 / NRRL 8165 / MA-4680)).